Consider the following 294-residue polypeptide: tRNA pseudouridine synthase B (294 aa).

Residue aspartate 39 is the Nucleophile of the active site.

The protein belongs to the pseudouridine synthase TruB family. Type 1 subfamily.

The enzyme catalyses uridine(55) in tRNA = pseudouridine(55) in tRNA. Its function is as follows. Responsible for synthesis of pseudouridine from uracil-55 in the psi GC loop of transfer RNAs. The protein is tRNA pseudouridine synthase B of Streptococcus agalactiae serotype Ia (strain ATCC 27591 / A909 / CDC SS700).